Here is a 362-residue protein sequence, read N- to C-terminus: DNA replication and repair protein RecF (362 aa).

Position 30–37 (30–37 (GLNAQGKS)) interacts with ATP.

The protein belongs to the RecF family.

The protein localises to the cytoplasm. Functionally, the RecF protein is involved in DNA metabolism; it is required for DNA replication and normal SOS inducibility. RecF binds preferentially to single-stranded, linear DNA. It also seems to bind ATP. This Thermoanaerobacter sp. (strain X514) protein is DNA replication and repair protein RecF.